Here is a 529-residue protein sequence, read N- to C-terminus: Bifunctional purine biosynthesis protein PurH (529 aa).

The region spanning 1–148 (MQQRRPVRRA…KNHKDVAIVV (148 aa)) is the MGS-like domain. Lys-287 bears the N6-acetyllysine mark.

The protein belongs to the PurH family.

It carries out the reaction (6R)-10-formyltetrahydrofolate + 5-amino-1-(5-phospho-beta-D-ribosyl)imidazole-4-carboxamide = 5-formamido-1-(5-phospho-D-ribosyl)imidazole-4-carboxamide + (6S)-5,6,7,8-tetrahydrofolate. The catalysed reaction is IMP + H2O = 5-formamido-1-(5-phospho-D-ribosyl)imidazole-4-carboxamide. Its pathway is purine metabolism; IMP biosynthesis via de novo pathway; 5-formamido-1-(5-phospho-D-ribosyl)imidazole-4-carboxamide from 5-amino-1-(5-phospho-D-ribosyl)imidazole-4-carboxamide (10-formyl THF route): step 1/1. It functions in the pathway purine metabolism; IMP biosynthesis via de novo pathway; IMP from 5-formamido-1-(5-phospho-D-ribosyl)imidazole-4-carboxamide: step 1/1. This chain is Bifunctional purine biosynthesis protein PurH, found in Escherichia coli O45:K1 (strain S88 / ExPEC).